The following is a 152-amino-acid chain: Aspartate carbamoyltransferase regulatory chain (152 aa).

Residues cysteine 108, cysteine 113, cysteine 137, and cysteine 140 each coordinate Zn(2+).

Belongs to the PyrI family. In terms of assembly, contains catalytic and regulatory chains. Zn(2+) is required as a cofactor.

Its function is as follows. Involved in allosteric regulation of aspartate carbamoyltransferase. The protein is Aspartate carbamoyltransferase regulatory chain of Neisseria meningitidis serogroup B (strain ATCC BAA-335 / MC58).